The primary structure comprises 117 residues: Large ribosomal subunit protein bL19 (117 aa).

It belongs to the bacterial ribosomal protein bL19 family.

In terms of biological role, this protein is located at the 30S-50S ribosomal subunit interface and may play a role in the structure and function of the aminoacyl-tRNA binding site. The chain is Large ribosomal subunit protein bL19 from Shewanella amazonensis (strain ATCC BAA-1098 / SB2B).